The following is a 159-amino-acid chain: Phosphopantetheine adenylyltransferase (159 aa).

Position 9 (S9) interacts with substrate. ATP is bound by residues 9-10 (SF) and H17. Substrate contacts are provided by K41, L73, and K87. ATP is bound by residues 88-90 (GLR), E98, and 122-128 (YSFLSSS).

The protein belongs to the bacterial CoaD family. As to quaternary structure, homohexamer. Mg(2+) serves as cofactor.

The protein localises to the cytoplasm. The catalysed reaction is (R)-4'-phosphopantetheine + ATP + H(+) = 3'-dephospho-CoA + diphosphate. It functions in the pathway cofactor biosynthesis; coenzyme A biosynthesis; CoA from (R)-pantothenate: step 4/5. Reversibly transfers an adenylyl group from ATP to 4'-phosphopantetheine, yielding dephospho-CoA (dPCoA) and pyrophosphate. The protein is Phosphopantetheine adenylyltransferase of Streptomyces coelicolor (strain ATCC BAA-471 / A3(2) / M145).